The sequence spans 214 residues: Ornithine decarboxylase antizyme 1 (214 aa).

This sequence belongs to the ODC antizyme family. Interacts with ODC1 and thereby sterically blocks ODC homodimerization.

Functionally, ornithine decarboxylase (ODC) antizyme protein that negatively regulates ODC activity and intracellular polyamine biosynthesis and uptake in response to increased intracellular polyamine levels. Binds to ODC monomers, inhibiting the assembly of the functional ODC homodimer, and targets the monomers for ubiquitin-independent proteolytic destruction by the 26S proteasome. The sequence is that of Ornithine decarboxylase antizyme 1 (oaz1a) from Danio rerio (Zebrafish).